A 297-amino-acid polypeptide reads, in one-letter code: GTPase Era (297 aa).

One can recognise an Era-type G domain in the interval 3 to 171; it reads KSGFVSIVGR…IKVIQNYLEE (169 aa). The segment at 11–18 is G1; the sequence is GRPNVGKS. 11-18 lines the GTP pocket; that stretch reads GRPNVGKS. The G2 stretch occupies residues 37–41; the sequence is QTTRN. Residues 58–61 form a G3 region; sequence DTPG. GTP-binding positions include 58–62 and 120–123; these read DTPGI and NKID. Residues 120–123 form a G4 region; that stretch reads NKID. Residues 150 to 152 form a G5 region; it reads ISA. In terms of domain architecture, KH type-2 spans 194–280; that stretch reads IREKVLHYLN…NLQLWVKVKE (87 aa).

This sequence belongs to the TRAFAC class TrmE-Era-EngA-EngB-Septin-like GTPase superfamily. Era GTPase family. Monomer.

Its subcellular location is the cytoplasm. It is found in the cell membrane. Its function is as follows. An essential GTPase that binds both GDP and GTP, with rapid nucleotide exchange. Plays a role in 16S rRNA processing and 30S ribosomal subunit biogenesis and possibly also in cell cycle regulation and energy metabolism. This is GTPase Era from Clostridioides difficile (strain 630) (Peptoclostridium difficile).